A 209-amino-acid chain; its full sequence is Orotate phosphoribosyltransferase (209 aa).

5-phospho-alpha-D-ribose 1-diphosphate is bound by residues Arg96, Lys100, His102, and Glu122 to Ser130. Ser126 provides a ligand contact to orotate.

It belongs to the purine/pyrimidine phosphoribosyltransferase family. PyrE subfamily. As to quaternary structure, homodimer. Mg(2+) serves as cofactor.

The enzyme catalyses orotidine 5'-phosphate + diphosphate = orotate + 5-phospho-alpha-D-ribose 1-diphosphate. The protein operates within pyrimidine metabolism; UMP biosynthesis via de novo pathway; UMP from orotate: step 1/2. Its function is as follows. Catalyzes the transfer of a ribosyl phosphate group from 5-phosphoribose 1-diphosphate to orotate, leading to the formation of orotidine monophosphate (OMP). The chain is Orotate phosphoribosyltransferase from Streptococcus agalactiae serotype Ia (strain ATCC 27591 / A909 / CDC SS700).